A 113-amino-acid chain; its full sequence is Hydrogenase maturation factor HybF (113 aa).

The Ni(2+) site is built by His-2 and Glu-3. Zn(2+) contacts are provided by Cys-73, Cys-76, Cys-89, and Cys-92.

Belongs to the HypA/HybF family. HybF subfamily.

Functionally, involved in the maturation of [NiFe] hydrogenases. Required for nickel insertion into the metal center of the hydrogenase. This Salmonella typhi protein is Hydrogenase maturation factor HybF.